A 204-amino-acid chain; its full sequence is CASP-like protein 1B2 (204 aa).

The Cytoplasmic portion of the chain corresponds to 1-28 (MASKGEEKPELVGSKQGIVSVTKAKHDQ). The chain crosses the membrane as a helical span at residues 29 to 49 (IVLVLRVVAFLATASATIVMG). The Extracellular portion of the chain corresponds to 50-80 (LNQETKTLLVGTIGTTPIRATLKAKFQHTPA). A helical membrane pass occupies residues 81–101 (FVFFVVANGLASVYNLVMLGV). Topologically, residues 102–114 (DVFGRKLDCKGLR) are cytoplasmic. A helical transmembrane segment spans residues 115 to 135 (LVIISILDMVIVAVVAAGASS). The Extracellular portion of the chain corresponds to 136–168 (AAFMAELGKNGNSHAKWNKICDKFESFCHQGGG). The helical transmembrane segment at 169–189 (ALIPSFIALLLLFLISAISII) threads the bilayer. Residues 190 to 204 (TLHNQKLTSPHATTP) lie on the Cytoplasmic side of the membrane.

The protein belongs to the Casparian strip membrane proteins (CASP) family. As to quaternary structure, homodimer and heterodimers.

The protein resides in the cell membrane. The chain is CASP-like protein 1B2 from Vitis vinifera (Grape).